We begin with the raw amino-acid sequence, 1029 residues long: Myosin phosphatase Rho-interacting protein (1029 aa).

Residues Met1 to Thr387 form an interaction with F-actin region. A PH 1 domain is found at Lys43–Arg150. Positions Asn152 to Val267 are disordered. Residues Ser179–Ser195 show a composition bias toward low complexity. Ser198, Ser224, Ser226, Ser230, and Ser232 each carry phosphoserine. Positions Ser226–Pro237 are enriched in low complexity. Over residues Thr245 to Val267 the composition is skewed to basic and acidic residues. Residues Ser271, Ser275, Ser294, and Ser297 each carry the phosphoserine modification. Disordered stretches follow at residues Ala279–Ser306 and Pro333–Glu383. At Thr300 the chain carries Phosphothreonine. Positions Arg338–Ala354 are enriched in basic and acidic residues. Ser369 carries the phosphoserine modification. Residues Leu391–Leu487 form the PH 2 domain. Residues Ser490–Ala614 form a disordered region. A compositionally biased stretch (polar residues) spans Pro492–Asp509. Ser497 carries the post-translational modification Phosphoserine. Basic and acidic residues predominate over residues Pro527–Glu550. An interaction with RHOA region spans residues Glu550–Ser828. The span at Arg562–Ser571 shows a compositional bias: polar residues. Basic and acidic residues predominate over residues Glu583 to Arg592. Phosphoserine is present on Ser622. A Phosphothreonine modification is found at Thr650. A coiled-coil region spans residues Ser675–Glu979. Ser804 is modified (phosphoserine). The interval Ser828 to Leu883 is interaction with PPP1R12A. A phosphoserine mark is found at Ser981, Ser997, Ser1018, and Ser1020.

Binds RHOA, PPP1R12A/MBS and PPP1R12C/MBS85 through adjacent coiled coil domains. Interacts with MYZAP. Binds F-actin through its N-terminus.

The protein localises to the cytoplasm. It is found in the cytoskeleton. Targets myosin phosphatase to the actin cytoskeleton. Required for the regulation of the actin cytoskeleton by RhoA and ROCK1. Depletion leads to an increased number of stress fibers in smooth muscle cells through stabilization of actin fibers by phosphorylated myosin. Overexpression of MRIP as well as its F-actin-binding region leads to disassembly of stress fibers in neuronal cells. The protein is Myosin phosphatase Rho-interacting protein (Mprip) of Rattus norvegicus (Rat).